Here is a 237-residue protein sequence, read N- to C-terminus: Eukaryotic translation initiation factor 4E-1 (237 aa).

The segment at 1–61 (MVVEDTQKSV…KPPAALARNP (61 aa)) is disordered. The span at 25-44 (NNDDDDDDLEEGEIPVDGED) shows a compositional bias: acidic residues. Residues 47-58 (ATATTKPPAALA) show a composition bias toward low complexity. EIF4G-binding stretches follow at residues 62–65 (HPLE) and 72–108 (FDNP…NNIH). MRNA contacts are provided by residues 80–85 (KQAAWG), Lys112, and 130–131 (WE). Residues Cys135 and Cys173 are joined by a disulfide bond. Residues 156-165 (YTLLAMIGEQ) are EIF4G-binding. Residues 180–185 (RSRQDK) and 225–229 (KKLDR) each bind mRNA.

The protein belongs to the eukaryotic initiation factor 4E family. As to quaternary structure, EIF4F is a multi-subunit complex, the composition of which varies with external and internal environmental conditions. It is composed of at least EIF4A, EIF4E and EIF4G. EIF4E is also known to interact with other partners. In higher plants two isoforms of EIF4F have been identified, named isoform EIF4F and isoform EIF(iso)4F. Isoform EIF4F has subunits p220 and p26, whereas isoform EIF(iso)4F has subunits p82 and p28. (Microbial infection) Interacts with potyvirus viral genome-linked protein (VPg) in the nucleus; this interaction is possible in susceptible hosts but is impaired in resistant plants. Binds to soybean mosaic virus (SMV) VPg in the nucleus. Interacts with SMV nuclear inclusion protein A (NIa-Pro) and nuclear inclusion protein B (NIb) in the cytoplasm. According to the redox status, the Cys-135-Cys-173 disulfide bridge may have a role in regulating protein function by affecting its ability to bind capped mRNA. In terms of tissue distribution, mostly expressed in roots, flowers, immature pods and mature seeds, and, to a lower extent, in stems and leaves.

It localises to the nucleus. The protein localises to the cytoplasm. Functionally, component of the protein complex eIF4F, which is involved in the recognition of the mRNA cap, ATP-dependent unwinding of 5'-terminal secondary structure and recruitment of mRNA to the ribosome. Recognizes and binds the 7-methylguanosine-containing mRNA cap during an early step in the initiation of protein synthesis and facilitates ribosome binding by inducing the unwinding of the mRNAs secondary structures. Key component of recessive resistance to potyviruses (e.g. soybean mosaic virus (SMV), bean common mosaic virus (BCMV) and watermelon mosaic virus (WMV), but not bean pod mottle virus (BPMV)). (Microbial infection) Susceptibility host factor required for viral infection by recruiting viral RNAs to the host ribosomal complex via an interaction with viral genome-linked protein (VPg). The chain is Eukaryotic translation initiation factor 4E-1 from Glycine max (Soybean).